A 403-amino-acid polypeptide reads, in one-letter code: Enoyl-[acyl-carrier-protein] reductase [NADH] (403 aa).

NAD(+)-binding positions include 49–54 (GASSGY), 75–76 (FE), 112–113 (DA), and 141–142 (LA). A substrate-binding site is contributed by Y227. Catalysis depends on Y237, which acts as the Proton donor. Residues K246 and 276–278 (VVT) contribute to the NAD(+) site.

The protein belongs to the TER reductase family. Monomer.

It carries out the reaction a 2,3-saturated acyl-[ACP] + NAD(+) = a (2E)-enoyl-[ACP] + NADH + H(+). The protein operates within lipid metabolism; fatty acid biosynthesis. In terms of biological role, involved in the final reduction of the elongation cycle of fatty acid synthesis (FAS II). Catalyzes the reduction of a carbon-carbon double bond in an enoyl moiety that is covalently linked to an acyl carrier protein (ACP). This chain is Enoyl-[acyl-carrier-protein] reductase [NADH], found in Pseudomonas putida (strain ATCC 47054 / DSM 6125 / CFBP 8728 / NCIMB 11950 / KT2440).